The chain runs to 411 residues: GTPase Obg (411 aa).

In terms of domain architecture, Obg spans 1-157 (MQFIDEARFV…REIRLELRVL (157 aa)). The tract at residues 20–45 (AVSFHREKYRPRGGPDGGRGGDGGSV) is disordered. Residues 33 to 43 (GPDGGRGGDGG) show a composition bias toward gly residues. The OBG-type G domain occupies 158–330 (SDVGLVGLPN…LERSAEAAPR (173 aa)). GTP contacts are provided by residues 164–171 (GLPNAGKS), 189–193 (FTTLT), 212–215 (DIPG), 276–279 (NKVD), and 311–313 (ARL). Mg(2+)-binding residues include Ser-171 and Thr-191. An OCT domain is found at 335–411 (VFRPSWRGLR…RIGDVSFEFR (77 aa)).

This sequence belongs to the TRAFAC class OBG-HflX-like GTPase superfamily. OBG GTPase family. Monomer. Requires Mg(2+) as cofactor.

The protein resides in the cytoplasm. Functionally, an essential GTPase which binds GTP, GDP and possibly (p)ppGpp with moderate affinity, with high nucleotide exchange rates and a fairly low GTP hydrolysis rate. Plays a role in control of the cell cycle, stress response, ribosome biogenesis and in those bacteria that undergo differentiation, in morphogenesis control. This chain is GTPase Obg, found in Rubrobacter xylanophilus (strain DSM 9941 / JCM 11954 / NBRC 16129 / PRD-1).